A 138-amino-acid polypeptide reads, in one-letter code: Small ribosomal subunit protein bS6 (138 aa).

Residues 94 to 138 are disordered; it reads VKQDGPLPTPKPTSKENEPEKEEVKPTEEKTESPSKDEKKEDSKE. Residues 106–138 show a composition bias toward basic and acidic residues; sequence TSKENEPEKEEVKPTEEKTESPSKDEKKEDSKE.

Belongs to the bacterial ribosomal protein bS6 family.

In terms of biological role, binds together with bS18 to 16S ribosomal RNA. The chain is Small ribosomal subunit protein bS6 from Prochlorococcus marinus (strain NATL2A).